Reading from the N-terminus, the 223-residue chain is Putative lipoprotein NMB1126/NMB1164 (223 aa).

Residues 1–19 form the signal peptide; it reads MKTVSTAVVLAAAAVSLTG. Cys-20 is lipidated: N-palmitoyl cysteine. Residue Cys-20 is the site of S-diacylglycerol cysteine attachment.

The protein localises to the cell membrane. This chain is Putative lipoprotein NMB1126/NMB1164, found in Neisseria meningitidis serogroup B (strain ATCC BAA-335 / MC58).